Consider the following 262-residue polypeptide: Hemin import ATP-binding protein HmuV (262 aa).

Residues 3–244 (LQARNLTLAR…DHMRRVYGIE (242 aa)) form the ABC transporter domain. Position 35–42 (35–42 (GANGAGKS)) interacts with ATP.

The protein belongs to the ABC transporter superfamily. Heme (hemin) importer (TC 3.A.1.14.5) family. The complex is composed of two ATP-binding proteins (HmuV), two transmembrane proteins (HmuU) and a solute-binding protein (HmuT).

Its subcellular location is the cell inner membrane. Its function is as follows. Part of the ABC transporter complex HmuTUV involved in hemin import. Responsible for energy coupling to the transport system. The sequence is that of Hemin import ATP-binding protein HmuV from Bordetella bronchiseptica (strain ATCC BAA-588 / NCTC 13252 / RB50) (Alcaligenes bronchisepticus).